We begin with the raw amino-acid sequence, 195 residues long: Probable nicotinate-nucleotide adenylyltransferase (195 aa).

The protein belongs to the NadD family.

The enzyme catalyses nicotinate beta-D-ribonucleotide + ATP + H(+) = deamido-NAD(+) + diphosphate. The protein operates within cofactor biosynthesis; NAD(+) biosynthesis; deamido-NAD(+) from nicotinate D-ribonucleotide: step 1/1. In terms of biological role, catalyzes the reversible adenylation of nicotinate mononucleotide (NaMN) to nicotinic acid adenine dinucleotide (NaAD). This is Probable nicotinate-nucleotide adenylyltransferase from Mesorhizobium japonicum (strain LMG 29417 / CECT 9101 / MAFF 303099) (Mesorhizobium loti (strain MAFF 303099)).